Reading from the N-terminus, the 1112-residue chain is Carbamoyl phosphate synthase large chain (1112 aa).

The interval 1–407 (MPRRTDLRHV…ALGKVMRSLE (407 aa)) is carboxyphosphate synthetic domain. ATP is bound by residues arginine 134, arginine 174, glycine 180, glycine 181, glutamate 213, isoleucine 215, glutamate 220, glycine 246, valine 247, histidine 248, glutamine 290, and glutamate 304. An ATP-grasp 1 domain is found at 138–333 (KDIVTKVGGE…IAKIAAKLAI (196 aa)). Residues glutamine 290, glutamate 304, and asparagine 306 each coordinate Mg(2+). Positions 290, 304, and 306 each coordinate Mn(2+). The tract at residues 408 to 559 (TGRAGFWTAP…ELDPAAESEV (152 aa)) is oligomerization domain. The segment at 560–965 (APQAERPKVL…AFAKSQTAAY (406 aa)) is carbamoyl phosphate synthetic domain. The ATP-grasp 2 domain maps to 693–884 (GEVLRTAGLP…LAKACARIML (192 aa)). Residues arginine 729, arginine 768, leucine 770, glutamate 775, glycine 800, isoleucine 801, histidine 802, serine 803, glutamine 843, and glutamate 855 each contribute to the ATP site. The Mg(2+) site is built by glutamine 843, glutamate 855, and asparagine 857. Positions 843, 855, and 857 each coordinate Mn(2+). In terms of domain architecture, MGS-like spans 966 to 1112 (GSLPSEGTVF…LQELHSELGN (147 aa)). The interval 966 to 1112 (GSLPSEGTVF…LQELHSELGN (147 aa)) is allosteric domain.

The protein belongs to the CarB family. As to quaternary structure, composed of two chains; the small (or glutamine) chain promotes the hydrolysis of glutamine to ammonia, which is used by the large (or ammonia) chain to synthesize carbamoyl phosphate. Tetramer of heterodimers (alpha,beta)4. Mg(2+) is required as a cofactor. Mn(2+) serves as cofactor.

It catalyses the reaction hydrogencarbonate + L-glutamine + 2 ATP + H2O = carbamoyl phosphate + L-glutamate + 2 ADP + phosphate + 2 H(+). It carries out the reaction hydrogencarbonate + NH4(+) + 2 ATP = carbamoyl phosphate + 2 ADP + phosphate + 2 H(+). It participates in amino-acid biosynthesis; L-arginine biosynthesis; carbamoyl phosphate from bicarbonate: step 1/1. Its pathway is pyrimidine metabolism; UMP biosynthesis via de novo pathway; (S)-dihydroorotate from bicarbonate: step 1/3. In terms of biological role, large subunit of the glutamine-dependent carbamoyl phosphate synthetase (CPSase). CPSase catalyzes the formation of carbamoyl phosphate from the ammonia moiety of glutamine, carbonate, and phosphate donated by ATP, constituting the first step of 2 biosynthetic pathways, one leading to arginine and/or urea and the other to pyrimidine nucleotides. The large subunit (synthetase) binds the substrates ammonia (free or transferred from glutamine from the small subunit), hydrogencarbonate and ATP and carries out an ATP-coupled ligase reaction, activating hydrogencarbonate by forming carboxy phosphate which reacts with ammonia to form carbamoyl phosphate. This Mycobacterium sp. (strain JLS) protein is Carbamoyl phosphate synthase large chain.